A 68-amino-acid polypeptide reads, in one-letter code: MEC1-mediated checkpoint protein HUG1 (68 aa).

It localises to the cytoplasm. It is found in the nucleus. Functionally, involved in the MEC1-mediated checkpoint response to DNA damage and replication arrest. The protein is MEC1-mediated checkpoint protein HUG1 (HUG1) of Saccharomyces cerevisiae (strain ATCC 204508 / S288c) (Baker's yeast).